The following is a 355-amino-acid chain: MSGISAQLVKKLRDLTDAGMMDCKKALVEVAGDLQKAIDFLREKGLSKAAKKADRIAAEGVVALEVAPDFKSAMMVEINSETDFVAKNEGFKELVKKTLETIKAHNIHTPEELLKSQLDNKPFEEYLHSQIAVIGENILVRKIAHLKALSSHIVNGYAHSNARVGVLIGIKYNNEKNAPKVVELARNIAMHAAAMKPQVLDCKDFSLDFVKKETLALIAEIEKDNEEAKRLGKPLKNIPTFGSRIELSDEVLAHQKKAFENELKEQGKPEKIWDKIVPGKMERFIADNTLIDQRLTLLGQFYVMDDKKTIAQVVADCSKEWDDDLKITEYVRFELGEGIEKKAENFAEEVALQMK.

The involved in Mg(2+) ion dislocation from EF-Tu stretch occupies residues 82–85; it reads TDFV.

It belongs to the EF-Ts family.

The protein localises to the cytoplasm. Its function is as follows. Associates with the EF-Tu.GDP complex and induces the exchange of GDP to GTP. It remains bound to the aminoacyl-tRNA.EF-Tu.GTP complex up to the GTP hydrolysis stage on the ribosome. The chain is Elongation factor Ts from Helicobacter pylori (strain G27).